The following is a 268-amino-acid chain: Stomatin homolog PYRAB06580 (268 aa).

The helical transmembrane segment at 1-21 (MILPTNFFVTTIILLFILIFL) threads the bilayer. Coiled coils occupy residues 125-152 (GQAH…EATD) and 178-213 (KQAE…ISEH).

The protein belongs to the band 7/mec-2 family. In terms of assembly, homotrimer.

The protein resides in the membrane. This Pyrococcus abyssi (strain GE5 / Orsay) protein is Stomatin homolog PYRAB06580.